A 442-amino-acid chain; its full sequence is Cysteine proteinase 4 (442 aa).

A signal peptide spans 1 to 17; the sequence is MRVLSFLCLLLVSYASA. Residues 18–111 constitute a propeptide, activation peptide; the sequence is KQQFSELQYR…TEEEKIFSTP (94 aa). Intrachain disulfides connect Cys-132–Cys-178 and Cys-169–Cys-212. Residue Cys-135 is part of the active site. Residues Asn-228 and Asn-254 are each glycosylated (N-linked (GlcNAc...) asparagine). Cys-270 and Cys-428 are oxidised to a cystine. Residue His-277 is part of the active site. A disordered region spans residues 286–396; the sequence is SGSSSSSGSS…SGSGSGAVEA (111 aa). Residues 287-376 show a composition bias toward low complexity; that stretch reads GSSSSSGSSS…SASGQASASG (90 aa). The span at 377–391 shows a compositional bias: gly residues; sequence SGSGSGSGSGSGSGS. Asn-406 is a catalytic residue.

It belongs to the peptidase C1 family. Post-translationally, glycosylated; contains GlcNAc-alpha-1-P-Ser residues and fucose.

It localises to the lysosome. The sequence is that of Cysteine proteinase 4 (cprD) from Dictyostelium discoideum (Social amoeba).